Here is a 517-residue protein sequence, read N- to C-terminus: Peptide chain release factor 3 (517 aa).

In terms of domain architecture, tr-type G spans Ala-9–Arg-269. GTP contacts are provided by residues Ser-18–Thr-25, Asp-86–His-90, and Asn-140–Asp-143.

The protein belongs to the TRAFAC class translation factor GTPase superfamily. Classic translation factor GTPase family. PrfC subfamily.

The protein resides in the cytoplasm. In terms of biological role, increases the formation of ribosomal termination complexes and stimulates activities of RF-1 and RF-2. It binds guanine nucleotides and has strong preference for UGA stop codons. It may interact directly with the ribosome. The stimulation of RF-1 and RF-2 is significantly reduced by GTP and GDP, but not by GMP. In Halorhodospira halophila (strain DSM 244 / SL1) (Ectothiorhodospira halophila (strain DSM 244 / SL1)), this protein is Peptide chain release factor 3.